A 210-amino-acid polypeptide reads, in one-letter code: DNA-directed RNA polymerase subunit 5-like protein 1 (210 aa).

This sequence belongs to the archaeal Rpo5/eukaryotic RPB5 RNA polymerase subunit family.

It is found in the nucleus. This is DNA-directed RNA polymerase subunit 5-like protein 1 (NRPB5L1) from Arabidopsis thaliana (Mouse-ear cress).